The chain runs to 617 residues: AUGMIN subunit 3 (617 aa).

Coiled-coil stretches lie at residues 107–140 (DATLAHKAEALELQRQLRRLQTQYDLLTGQSSAL), 314–334 (LHSLRRKHADLVEEISTLYQK), and 481–504 (AIIQQIVALQSDLSSLQSDLENSL).

It belongs to the HAUS3 family. As to quaternary structure, part of the augmin complex composed of 8 subunits. The complex acts on microtubules and interacts with gamma-tubulin in spindles and the phragmoplast. Interacts with AUG1.

The protein resides in the cytoplasm. It is found in the cytoskeleton. The protein localises to the spindle. It localises to the phragmoplast. In terms of biological role, involved in microtubules reorganization during spindle and phragmoplast development. Required for gamma-tubulin localization during mitosis. In Arabidopsis thaliana (Mouse-ear cress), this protein is AUGMIN subunit 3.